A 274-amino-acid chain; its full sequence is Protein LNK4 (274 aa).

A disordered region spans residues 209–249 (NSQQKSDSNSDEFLEDRTRETEFETKLNRQSRGQSHIQQDG). A compositionally biased stretch (basic and acidic residues) spans 223–235 (EDRTRETEFETKL). Residues 236–249 (NRQSRGQSHIQQDG) are compositionally biased toward polar residues.

In terms of assembly, interacts with REV8.

Probable transcriptional coactivator. The protein is Protein LNK4 of Arabidopsis thaliana (Mouse-ear cress).